The following is a 468-amino-acid chain: Ribulose bisphosphate carboxylase large chain (468 aa).

Position 5 is an N6,N6,N6-trimethyllysine (Lys5). Substrate contacts are provided by Asn114 and Thr164. Lys166 serves as the catalytic Proton acceptor. Lys168 contributes to the substrate binding site. Lys192, Asp194, and Glu195 together coordinate Mg(2+). At Lys192 the chain carries N6-carboxylysine. His285 acts as the Proton acceptor in catalysis. The substrate site is built by Arg286, His318, and Ser370.

It belongs to the RuBisCO large chain family. Type I subfamily. As to quaternary structure, heterohexadecamer of 8 large chains and 8 small chains; disulfide-linked. The disulfide link is formed within the large subunit homodimers. Mg(2+) serves as cofactor. Post-translationally, the disulfide bond which can form in the large chain dimeric partners within the hexadecamer appears to be associated with oxidative stress and protein turnover.

It is found in the plastid. It localises to the chloroplast. The catalysed reaction is 2 (2R)-3-phosphoglycerate + 2 H(+) = D-ribulose 1,5-bisphosphate + CO2 + H2O. The enzyme catalyses D-ribulose 1,5-bisphosphate + O2 = 2-phosphoglycolate + (2R)-3-phosphoglycerate + 2 H(+). In terms of biological role, ruBisCO catalyzes two reactions: the carboxylation of D-ribulose 1,5-bisphosphate, the primary event in carbon dioxide fixation, as well as the oxidative fragmentation of the pentose substrate in the photorespiration process. Both reactions occur simultaneously and in competition at the same active site. The chain is Ribulose bisphosphate carboxylase large chain from Datura stramonium (Jimsonweed).